Here is a 105-residue protein sequence, read N- to C-terminus: MEHVNEILATVGRILHETTTANTNVANKSTERLGAYIGAGITMVGGATVGLGQGYIFGKAVEAVARNPEVEKQVFKLIFIGSAISESSSIYSLLIAFILIFVSGA.

2 helical membrane passes run 37–57 and 82–102; these read IGAGITMVGGATVGLGQGYIF and SAISESSSIYSLLIAFILIFV.

It belongs to the ATPase C chain family. F-type ATPases have 2 components, F(1) - the catalytic core - and F(0) - the membrane proton channel. F(1) has five subunits: alpha(3), beta(3), gamma(1), delta(1), epsilon(1). F(0) has three main subunits: a(1), b(2) and c(10-14). The alpha and beta chains form an alternating ring which encloses part of the gamma chain. F(1) is attached to F(0) by a central stalk formed by the gamma and epsilon chains, while a peripheral stalk is formed by the delta and b chains.

It localises to the cell membrane. Its function is as follows. F(1)F(0) ATP synthase produces ATP from ADP in the presence of a proton or sodium gradient. F-type ATPases consist of two structural domains, F(1) containing the extramembraneous catalytic core and F(0) containing the membrane proton channel, linked together by a central stalk and a peripheral stalk. During catalysis, ATP synthesis in the catalytic domain of F(1) is coupled via a rotary mechanism of the central stalk subunits to proton translocation. In terms of biological role, key component of the F(0) channel; it plays a direct role in translocation across the membrane. A homomeric c-ring of between 10-14 subunits forms the central stalk rotor element with the F(1) delta and epsilon subunits. The sequence is that of ATP synthase subunit c from Mycoplasma pneumoniae (strain ATCC 29342 / M129 / Subtype 1) (Mycoplasmoides pneumoniae).